The chain runs to 778 residues: Probable cation-transporting ATPase exp7 (778 aa).

The Cytoplasmic segment spans residues 1-37 (MDKNKIMGLTQREVKERQAEGLVNDFTASASTSTWQI). The helical transmembrane segment at 38 to 57 (VKRNVFTLFNALNFAIALAL) threads the bilayer. Residues 58 to 64 (AFVQAWS) lie on the Extracellular side of the membrane. A helical membrane pass occupies residues 65–84 (NLVFFAVICFNAFSGIVTEL). The Cytoplasmic segment spans residues 85–209 (RAKHMVDKLN…PINSRIMKSL (125 aa)). Residues 210–229 (DKLAGFTGKIIIPFGLALLL) form a helical membrane-spanning segment. Topologically, residues 230 to 242 (EALLLKGLPLKSS) are extracellular. A helical membrane pass occupies residues 243–260 (VVNSSTALLGMLPKGIAL). Residues 261–586 (LTITSLLTAV…FEGRRVVNNI (326 aa)) lie on the Cytoplasmic side of the membrane. The active-site 4-aspartylphosphate intermediate is the Asp298. Mg(2+) contacts are provided by Asp532 and Asp536. Residues 587–606 (AHIAPIFLIKTIYSFLLAVI) traverse the membrane as a helical segment. The Extracellular segment spans residues 607–624 (CIASALLGRSEWILIFPF). A helical transmembrane segment spans residues 625 to 645 (IPIQITMIDQFVEGFPPFVLT). Residues 646-663 (FERNIKPVEQNFLRKSML) are Cytoplasmic-facing. The chain crosses the membrane as a helical span at residues 664 to 684 (RALPSALMVVFSVLFVKMFGA). Residues 685 to 689 (SQGWS) lie on the Extracellular side of the membrane. Residues 690–708 (ELEISTLLYYLLGSIGFLS) form a helical membrane-spanning segment. Residues 709 to 716 (VFRACMPF) lie on the Cytoplasmic side of the membrane. A helical membrane pass occupies residues 717–739 (TLWRVLLIVWSVGGFLATALFPR). Residues 740–757 (IQKLLEISTLTEQTLPVY) lie on the Extracellular side of the membrane. Residues 758–777 (GVMMLVFTVIFILTSRYQAK) traverse the membrane as a helical segment. Lys778 is a topological domain (cytoplasmic).

Belongs to the cation transport ATPase (P-type) (TC 3.A.3) family.

It localises to the cell membrane. It carries out the reaction ATP + H2O = ADP + phosphate + H(+). The sequence is that of Probable cation-transporting ATPase exp7 (exp7) from Streptococcus pneumoniae serotype 4 (strain ATCC BAA-334 / TIGR4).